Here is a 158-residue protein sequence, read N- to C-terminus: ABA-responsive protein ABR18 (158 aa).

Belongs to the BetVI family.

The protein is ABA-responsive protein ABR18 of Pisum sativum (Garden pea).